We begin with the raw amino-acid sequence, 205 residues long: Metalloproteinase inhibitor 1 (205 aa).

The signal sequence occupies residues 1 to 24 (MMAPFASLASGILLLLSLIASSKA). Residue Cys-25 coordinates Zn(2+). The tract at residues 25-28 (CSCA) is involved in metalloproteinase-binding. Disulfide bonds link Cys-25-Cys-94, Cys-27-Cys-123, Cys-37-Cys-148, Cys-151-Cys-197, Cys-156-Cys-161, and Cys-169-Cys-189. Residues 25-148 (CSCAPPHPQT…AFSKTYSAGC (124 aa)) enclose the NTR domain. N-linked (GlcNAc...) asparagine glycosylation occurs at Asn-54. An involved in metalloproteinase-binding region spans residues 91–92 (ES). A glycan (N-linked (GlcNAc...) asparagine) is linked at Asn-102. Residue Ser-179 is modified to Phosphoserine.

Belongs to the protease inhibitor I35 (TIMP) family. In terms of assembly, interacts with MMP1, MMP3, MMP10 and MMP13, but has only very low affinity for MMP14. Interacts with CD63; identified in a complex with CD63 and ITGB1. Post-translationally, the activity of TIMP1 is dependent on the presence of disulfide bonds. N-glycosylated. In terms of tissue distribution, found in fetal and adult tissues. Highest levels are found in bone. Also found in lung, ovary and uterus.

It is found in the secreted. Metalloproteinase inhibitor that functions by forming one to one complexes with target metalloproteinases, such as collagenases, and irreversibly inactivates them by binding to their catalytic zinc cofactor. Acts on MMP1, MMP2, MMP3, MMP7, MMP8, MMP9, MMP10, MMP11, MMP12, MMP13 and MMP16. Does not act on MMP14. Also functions as a growth factor that regulates cell differentiation, migration and cell death and activates cellular signaling cascades via CD63 and ITGB1. Plays a role in integrin signaling. In Mus musculus (Mouse), this protein is Metalloproteinase inhibitor 1 (Timp1).